We begin with the raw amino-acid sequence, 129 residues long: Small ribosomal subunit protein uS11 (129 aa).

Belongs to the universal ribosomal protein uS11 family. Part of the 30S ribosomal subunit. Interacts with proteins S7 and S18. Binds to IF-3.

Its function is as follows. Located on the platform of the 30S subunit, it bridges several disparate RNA helices of the 16S rRNA. Forms part of the Shine-Dalgarno cleft in the 70S ribosome. This is Small ribosomal subunit protein uS11 from Lysinibacillus sphaericus (strain C3-41).